A 293-amino-acid chain; its full sequence is Ribosomal RNA small subunit methyltransferase A (293 aa).

Positions 29, 31, 56, 77, 102, and 127 each coordinate S-adenosyl-L-methionine.

It belongs to the class I-like SAM-binding methyltransferase superfamily. rRNA adenine N(6)-methyltransferase family. RsmA subfamily.

The protein resides in the cytoplasm. The enzyme catalyses adenosine(1518)/adenosine(1519) in 16S rRNA + 4 S-adenosyl-L-methionine = N(6)-dimethyladenosine(1518)/N(6)-dimethyladenosine(1519) in 16S rRNA + 4 S-adenosyl-L-homocysteine + 4 H(+). Specifically dimethylates two adjacent adenosines (A1518 and A1519) in the loop of a conserved hairpin near the 3'-end of 16S rRNA in the 30S particle. May play a critical role in biogenesis of 30S subunits. The protein is Ribosomal RNA small subunit methyltransferase A of Geobacillus kaustophilus (strain HTA426).